The chain runs to 199 residues: Recombination protein RecR (199 aa).

The C4-type zinc-finger motif lies at 58 to 73; the sequence is CKTCGNIDTQSPCTVC. In terms of domain architecture, Toprim spans 81-176; that stretch reads AMIVVVADVA…KVTRLAHGVP (96 aa).

This sequence belongs to the RecR family.

Functionally, may play a role in DNA repair. It seems to be involved in an RecBC-independent recombinational process of DNA repair. It may act with RecF and RecO. This chain is Recombination protein RecR, found in Bradyrhizobium sp. (strain ORS 278).